The sequence spans 116 residues: Venom nerve growth factor (116 aa).

3 disulfides stabilise this stretch: C14–C78, C56–C106, and C66–C108.

It belongs to the NGF-beta family. In terms of assembly, homodimer; non-covalently linked. In terms of processing, not glycosylated. In terms of tissue distribution, expressed by the venom gland.

Its subcellular location is the secreted. Functionally, nerve growth factor is important for the development and maintenance of the sympathetic and sensory nervous systems. It stimulates division and differentiation of sympathetic and embryonic sensory neurons as well as basal forebrain cholinergic neurons in the brain. Its relevance in the snake venom is not clear. However, it has been shown to inhibit metalloproteinase-dependent proteolysis of platelet glycoprotein Ib alpha, suggesting a metalloproteinase inhibition to prevent metalloprotease autodigestion and/or protection against prey proteases. Binds a lipid between the two protein chains in the homodimer. The lipid-bound form promotes histamine relase from mouse mast cells, contrary to the lipid-free form. The polypeptide is Venom nerve growth factor (Naja naja (Indian cobra)).